The primary structure comprises 188 residues: GTP cyclohydrolase 1 (188 aa).

The Zn(2+) site is built by C78, H81, and C150.

Belongs to the GTP cyclohydrolase I family. In terms of assembly, toroid-shaped homodecamer, composed of two pentamers of five dimers.

The enzyme catalyses GTP + H2O = 7,8-dihydroneopterin 3'-triphosphate + formate + H(+). Its pathway is cofactor biosynthesis; 7,8-dihydroneopterin triphosphate biosynthesis; 7,8-dihydroneopterin triphosphate from GTP: step 1/1. This is GTP cyclohydrolase 1 from Geobacillus kaustophilus (strain HTA426).